We begin with the raw amino-acid sequence, 449 residues long: Nucleoprotein (449 aa).

Residues 1-55 (MSFTPGKQSSSRASSGNRSGNGILKWADQSDQSRNVQTRGRRVQSKQTATSQQPS) are disordered. Positions 9 to 22 (SSSRASSGNRSGNG) are enriched in low complexity. 2 stretches are compositionally biased toward polar residues: residues 29 to 38 (QSDQSRNVQT) and 45 to 55 (SKQTATSQQPS). An RNA-binding region spans residues 52 to 194 (QQPSGGTVVP…GYYIEGSGRS (143 aa)). The CoV N NTD domain maps to 61–190 (PYYSWFSGIT…VLPQGYYIEG (130 aa)). Residues Arg-106, Arg-122, and Arg-164 each coordinate RNA. Disordered stretches follow at residues 158–231 (PADI…VTPD), 266–297 (ILNK…NFGG), and 387–449 (MMNI…TSEI). Ser-167 is modified (phosphoserine; by host). Thr-174 is subject to Phosphothreonine; by host. Position 191 is a phosphoserine; by host (Ser-191). Composition is skewed to polar residues over residues 194–204 (SAPNSRSTSRA) and 212–227 (GSRS…STPG). In terms of domain architecture, CoV N CTD spans 259–384 (AKEVRQKILN…QNLNAYQHQE (126 aa)). The span at 266–276 (ILNKPRQKRSP) shows a compositional bias: basic residues. The segment at 266-385 (ILNKPRQKRS…NLNAYQHQED (120 aa)) is dimerization. A Phosphoserine; by host modification is found at Ser-391. Residues 400-410 (QKNGQVENDNV) are compositionally biased toward polar residues. Residues 423 to 440 (KSRELTAEDISLLKKMDE) are compositionally biased toward basic and acidic residues. Ser-424 is modified (phosphoserine; by host). Thr-428 bears the Phosphothreonine; by host mark.

The protein belongs to the betacoronavirus nucleocapsid protein family. Homooligomer. Both monomeric and oligomeric forms interact with RNA. Interacts with protein M. Interacts with NSP3; this interaction serves to tether the genome to the newly translated replicase-transcriptase complex at a very early stage of infection. ADP-ribosylated. The ADP-ribosylation is retained in the virion during infection. In terms of processing, phosphorylated on serine and threonine residues.

Its subcellular location is the virion. It localises to the host endoplasmic reticulum-Golgi intermediate compartment. The protein resides in the host Golgi apparatus. Functionally, packages the positive strand viral genome RNA into a helical ribonucleocapsid (RNP) and plays a fundamental role during virion assembly through its interactions with the viral genome and membrane protein M. Plays an important role in enhancing the efficiency of subgenomic viral RNA transcription as well as viral replication. This is Nucleoprotein from Sus scrofa (Pig).